The sequence spans 248 residues: Tyrosine recombinase XerD-like (248 aa).

The Core-binding (CB) domain occupies 1 to 72; that stretch reads MIAFIEPFLA…TVNQFLYYLY (72 aa). The region spanning 92 to 248 is the Tyr recombinase domain; the sequence is SLKPQLTRLD…PITLEKYYKM (157 aa). Arginine 213 is a catalytic residue. The O-(3'-phospho-DNA)-tyrosine intermediate role is filled by tyrosine 245.

Belongs to the 'phage' integrase family. XerD-like subfamily.

It localises to the cytoplasm. Putative tyrosine recombinase. Not involved in the cutting and rejoining of the recombining DNA molecules on dif(SL) site. This Streptococcus equi subsp. zooepidemicus (strain MGCS10565) protein is Tyrosine recombinase XerD-like.